The sequence spans 513 residues: ATP synthase subunit alpha (513 aa).

Glycine 169–threonine 176 lines the ATP pocket.

It belongs to the ATPase alpha/beta chains family. F-type ATPases have 2 components, CF(1) - the catalytic core - and CF(0) - the membrane proton channel. CF(1) has five subunits: alpha(3), beta(3), gamma(1), delta(1), epsilon(1). CF(0) has three main subunits: a(1), b(2) and c(9-12). The alpha and beta chains form an alternating ring which encloses part of the gamma chain. CF(1) is attached to CF(0) by a central stalk formed by the gamma and epsilon chains, while a peripheral stalk is formed by the delta and b chains.

The protein resides in the cell inner membrane. The catalysed reaction is ATP + H2O + 4 H(+)(in) = ADP + phosphate + 5 H(+)(out). Its function is as follows. Produces ATP from ADP in the presence of a proton gradient across the membrane. The alpha chain is a regulatory subunit. The protein is ATP synthase subunit alpha of Shewanella baltica (strain OS223).